Consider the following 283-residue polypeptide: Thymidylate synthase (283 aa).

R22 is a dUMP binding site. C160 (nucleophile) is an active-site residue. Residues 180 to 183 (RSCD), N191, and 221 to 223 (HIY) contribute to the dUMP site. D183 provides a ligand contact to (6R)-5,10-methylene-5,6,7,8-tetrahydrofolate. Residue S282 coordinates (6R)-5,10-methylene-5,6,7,8-tetrahydrofolate.

This sequence belongs to the thymidylate synthase family. Bacterial-type ThyA subfamily. As to quaternary structure, homodimer.

The protein resides in the cytoplasm. It carries out the reaction dUMP + (6R)-5,10-methylene-5,6,7,8-tetrahydrofolate = 7,8-dihydrofolate + dTMP. The protein operates within pyrimidine metabolism; dTTP biosynthesis. Its function is as follows. Catalyzes the reductive methylation of 2'-deoxyuridine-5'-monophosphate (dUMP) to 2'-deoxythymidine-5'-monophosphate (dTMP) while utilizing 5,10-methylenetetrahydrofolate (mTHF) as the methyl donor and reductant in the reaction, yielding dihydrofolate (DHF) as a by-product. This enzymatic reaction provides an intracellular de novo source of dTMP, an essential precursor for DNA biosynthesis. This is Thymidylate synthase from Psychromonas ingrahamii (strain DSM 17664 / CCUG 51855 / 37).